The primary structure comprises 315 residues: Acetaldehyde dehydrogenase (315 aa).

Residue 13 to 16 (SGNI) participates in NAD(+) binding. Residue Cys-143 is the Acyl-thioester intermediate of the active site. Residues 174–182 (SAGPGTRKN) and Asn-285 each bind NAD(+).

It belongs to the acetaldehyde dehydrogenase family.

The enzyme catalyses acetaldehyde + NAD(+) + CoA = acetyl-CoA + NADH + H(+). The protein is Acetaldehyde dehydrogenase of Shewanella woodyi (strain ATCC 51908 / MS32).